We begin with the raw amino-acid sequence, 163 residues long: Phosphopantetheine adenylyltransferase (163 aa).

Substrate is bound at residue S9. ATP-binding positions include 9–10 (SF) and H17. The substrate site is built by K41, L73, and K87. ATP-binding positions include 88–90 (GLR), E98, and 124–130 (YTYVSST).

The protein belongs to the bacterial CoaD family. As to quaternary structure, homohexamer. Mg(2+) is required as a cofactor.

Its subcellular location is the cytoplasm. The enzyme catalyses (R)-4'-phosphopantetheine + ATP + H(+) = 3'-dephospho-CoA + diphosphate. It functions in the pathway cofactor biosynthesis; coenzyme A biosynthesis; CoA from (R)-pantothenate: step 4/5. Reversibly transfers an adenylyl group from ATP to 4'-phosphopantetheine, yielding dephospho-CoA (dPCoA) and pyrophosphate. This Fusobacterium nucleatum subsp. nucleatum (strain ATCC 25586 / DSM 15643 / BCRC 10681 / CIP 101130 / JCM 8532 / KCTC 2640 / LMG 13131 / VPI 4355) protein is Phosphopantetheine adenylyltransferase.